We begin with the raw amino-acid sequence, 1030 residues long: Carbamoyl phosphate synthase arginine-specific large chain (1030 aa).

Positions 1–401 are carboxyphosphate synthetic domain; that stretch reads MPKDTSISSI…AIQKAAASLE (401 aa). Residues arginine 129, arginine 169, glycine 175, glycine 176, lysine 208, isoleucine 210, glutamate 215, glycine 241, valine 242, histidine 243, glutamine 284, and glutamate 298 each coordinate ATP. Residues 133–327 form the ATP-grasp 1 domain; sequence RSLMNELKQP…IAKMAAKLAV (195 aa). Mg(2+)-binding residues include glutamine 284, glutamate 298, and asparagine 300. Glutamine 284, glutamate 298, and asparagine 300 together coordinate Mn(2+). The tract at residues 402–548 is oligomerization domain; it reads LKNIGTHLPE…YSTYFGETDG (147 aa). The tract at residues 549 to 928 is carbamoyl phosphate synthetic domain; it reads DISRKEKKRA…ALKKIYTRVW (380 aa). The ATP-grasp 2 domain maps to 675-863; the sequence is YQLLDELGLK…MIPLATRLLA (189 aa). The ATP site is built by arginine 711, glutamine 748, valine 750, glutamate 754, glycine 779, valine 780, histidine 781, serine 782, glutamine 822, and glutamate 834. The Mg(2+) site is built by glutamine 822, glutamate 834, and asparagine 836. Glutamine 822, glutamate 834, and asparagine 836 together coordinate Mn(2+). Residues 925–1027 form the MGS-like domain; that stretch reads TRVWSQKGSI…KDLYKKEVAS (103 aa). The tract at residues 929 to 1030 is allosteric domain; the sequence is SQKGSIYLQN…YKKEVASCTQ (102 aa).

Belongs to the CarB family. As to quaternary structure, composed of two chains; the small (or glutamine) chain promotes the hydrolysis of glutamine to ammonia, which is used by the large (or ammonia) chain to synthesize carbamoyl phosphate. Tetramer of heterodimers (alpha,beta)4. Mg(2+) serves as cofactor. Mn(2+) is required as a cofactor.

The enzyme catalyses hydrogencarbonate + L-glutamine + 2 ATP + H2O = carbamoyl phosphate + L-glutamate + 2 ADP + phosphate + 2 H(+). The catalysed reaction is hydrogencarbonate + NH4(+) + 2 ATP = carbamoyl phosphate + 2 ADP + phosphate + 2 H(+). The protein operates within amino-acid biosynthesis; L-arginine biosynthesis; carbamoyl phosphate from bicarbonate: step 1/1. Large subunit of the glutamine-dependent carbamoyl phosphate synthetase (CPSase). CPSase catalyzes the formation of carbamoyl phosphate from the ammonia moiety of glutamine, carbonate, and phosphate donated by ATP, constituting the first step of the biosynthetic pathway leading to arginine and/or urea. The large subunit (synthetase) binds the substrates ammonia (free or transferred from glutamine from the small subunit), hydrogencarbonate and ATP and carries out an ATP-coupled ligase reaction, activating hydrogencarbonate by forming carboxy phosphate which reacts with ammonia to form carbamoyl phosphate. The polypeptide is Carbamoyl phosphate synthase arginine-specific large chain (Bacillus subtilis (strain 168)).